We begin with the raw amino-acid sequence, 348 residues long: D-alanine--D-alanine ligase (348 aa).

An ATP-grasp domain is found at 132–334; sequence KRVLESIGIP…YPDLIEELVT (203 aa). ATP is bound at residue 162–217; the sequence is LARLTFPIFVKPANMGSSVGISKAQTKVELRKAIQLALTYDSRVLIEQGVIAREIE. Residues Asp-288, Glu-301, and Asn-303 each contribute to the Mg(2+) site.

Belongs to the D-alanine--D-alanine ligase family. Requires Mg(2+) as cofactor. Mn(2+) is required as a cofactor.

Its subcellular location is the cytoplasm. It catalyses the reaction 2 D-alanine + ATP = D-alanyl-D-alanine + ADP + phosphate + H(+). It participates in cell wall biogenesis; peptidoglycan biosynthesis. In terms of biological role, cell wall formation. The protein is D-alanine--D-alanine ligase of Streptococcus pyogenes serotype M4 (strain MGAS10750).